A 226-amino-acid polypeptide reads, in one-letter code: tRNA (guanine-N(7)-)-methyltransferase (226 aa).

Residues 1-22 (MTTPQQPHGPLRSFGRLKSRPV) are disordered. S-adenosyl-L-methionine contacts are provided by glutamate 59, glutamate 84, aspartate 111, and aspartate 133. Aspartate 133 is an active-site residue. Residue lysine 137 coordinates substrate. The interaction with RNA stretch occupies residues 139-144 (RHNKRR). Substrate contacts are provided by residues aspartate 169 and 206-209 (TRYE).

It belongs to the class I-like SAM-binding methyltransferase superfamily. TrmB family.

It catalyses the reaction guanosine(46) in tRNA + S-adenosyl-L-methionine = N(7)-methylguanosine(46) in tRNA + S-adenosyl-L-homocysteine. It participates in tRNA modification; N(7)-methylguanine-tRNA biosynthesis. Its function is as follows. Catalyzes the formation of N(7)-methylguanine at position 46 (m7G46) in tRNA. The sequence is that of tRNA (guanine-N(7)-)-methyltransferase from Caulobacter vibrioides (strain ATCC 19089 / CIP 103742 / CB 15) (Caulobacter crescentus).